Consider the following 632-residue polypeptide: 1-deoxy-D-xylulose-5-phosphate synthase (632 aa).

Residues histidine 72 and 113–115 contribute to the thiamine diphosphate site; that span reads GHA. Aspartate 144 provides a ligand contact to Mg(2+). Thiamine diphosphate contacts are provided by residues 145–146, asparagine 174, tyrosine 285, and glutamate 368; that span reads GA. Asparagine 174 contacts Mg(2+).

The protein belongs to the transketolase family. DXPS subfamily. In terms of assembly, homodimer. It depends on Mg(2+) as a cofactor. Thiamine diphosphate serves as cofactor.

It carries out the reaction D-glyceraldehyde 3-phosphate + pyruvate + H(+) = 1-deoxy-D-xylulose 5-phosphate + CO2. The protein operates within metabolic intermediate biosynthesis; 1-deoxy-D-xylulose 5-phosphate biosynthesis; 1-deoxy-D-xylulose 5-phosphate from D-glyceraldehyde 3-phosphate and pyruvate: step 1/1. In terms of biological role, catalyzes the acyloin condensation reaction between C atoms 2 and 3 of pyruvate and glyceraldehyde 3-phosphate to yield 1-deoxy-D-xylulose-5-phosphate (DXP). The protein is 1-deoxy-D-xylulose-5-phosphate synthase of Cyanothece sp. (strain PCC 7425 / ATCC 29141).